The primary structure comprises 137 residues: Acidic phospholipase A2 beta-bungarotoxin A6 chain (137 aa).

An N-terminal signal peptide occupies residues 1-9 (AVCVSLLGA). Positions 10–17 (ANIPPQHL) are excised as a propeptide. 6 disulfide bridges follow: cysteine 44-cysteine 136, cysteine 46-cysteine 62, cysteine 61-cysteine 117, cysteine 68-cysteine 110, cysteine 78-cysteine 103, and cysteine 96-cysteine 108. Ca(2+) contacts are provided by tyrosine 45, glycine 47, and glycine 49. Residue histidine 65 is part of the active site. Position 66 (aspartate 66) interacts with Ca(2+). Aspartate 111 is an active-site residue.

It belongs to the phospholipase A2 family. Group I subfamily. D49 sub-subfamily. Heterodimer; disulfide-linked. The A chains have phospholipase A2 activity and the B chains show homology with the basic protease inhibitors. Ca(2+) is required as a cofactor. Expressed by the venom gland.

The protein localises to the secreted. The catalysed reaction is a 1,2-diacyl-sn-glycero-3-phosphocholine + H2O = a 1-acyl-sn-glycero-3-phosphocholine + a fatty acid + H(+). Its function is as follows. Snake venom phospholipase A2 (PLA2) that inhibits neuromuscular transmission by blocking acetylcholine release from the nerve termini. PLA2 catalyzes the calcium-dependent hydrolysis of the 2-acyl groups in 3-sn-phosphoglycerides. This Bungarus multicinctus (Many-banded krait) protein is Acidic phospholipase A2 beta-bungarotoxin A6 chain.